The chain runs to 129 residues: C-type natriuretic peptide 1 (129 aa).

Residues methionine 1–glycine 24 form the signal peptide. The propeptide occupies lysine 25–lysine 107. Residues cysteine 113 and cysteine 129 are joined by a disulfide bond.

It belongs to the natriuretic peptide family.

The protein resides in the secreted. Functionally, hormone which plays a role in endochondral ossification through regulation of cartilaginous growth plate chondrocytes proliferation and differentiation. May also be vasoactive and natriuretic. May be important for freshwater adaptation. This chain is C-type natriuretic peptide 1, found in Aquarana catesbeiana (American bullfrog).